A 604-amino-acid polypeptide reads, in one-letter code: Prostaglandin G/H synthase 2 (604 aa).

Residues 1–17 (MLARAGLLCASLSPPHA) form the signal peptide. Residues 18–55 (ANPCCSNPCQNQGVCMSIGFDQYMCDCSRTGFYGENCS) enclose the EGF-like domain. 4 disulfide bridges follow: cysteine 21/cysteine 32, cysteine 22/cysteine 145, cysteine 26/cysteine 42, and cysteine 44/cysteine 54. Asparagine 53 carries an N-linked (GlcNAc...) asparagine glycan. Position 106 (arginine 106) interacts with substrate. Asparagine 130 carries an N-linked (GlcNAc...) asparagine glycan. Histidine 193 serves as the catalytic Proton acceptor. Tyrosine 341 contributes to the substrate binding site. Tyrosine 371 (for cyclooxygenase activity) is an active-site residue. Histidine 374 contributes to the heme b binding site. Asparagine 396 is a glycosylation site (N-linked (GlcNAc...) asparagine). An S-nitrosocysteine modification is found at cysteine 526. Cysteine 555 and cysteine 561 are oxidised to a cystine. Asparagine 580 carries an N-linked (GlcNAc...) asparagine glycan.

This sequence belongs to the prostaglandin G/H synthase family. In terms of assembly, homodimer. Heme b is required as a cofactor. In terms of processing, S-nitrosylation by NOS2 (iNOS) activates enzyme activity. S-nitrosylation may take place on different Cys residues in addition to Cys-526.

The protein resides in the microsome membrane. The protein localises to the endoplasmic reticulum membrane. It localises to the nucleus inner membrane. It is found in the nucleus outer membrane. It catalyses the reaction (5Z,8Z,11Z,14Z)-eicosatetraenoate + AH2 + 2 O2 = prostaglandin H2 + A + H2O. It carries out the reaction (5Z,8Z,11Z,14Z)-eicosatetraenoate + 2 O2 = prostaglandin G2. The enzyme catalyses prostaglandin G2 + AH2 = prostaglandin H2 + A + H2O. The catalysed reaction is (5Z,8Z,11Z,14Z,17Z)-eicosapentaenoate + 2 O2 = prostaglandin G3. It catalyses the reaction prostaglandin G3 + AH2 = prostaglandin H3 + A + H2O. It carries out the reaction (8Z,11Z,14Z)-eicosatrienoate + 2 O2 = prostaglandin G1. The enzyme catalyses prostaglandin G1 + AH2 = prostaglandin H1 + A + H2O. The catalysed reaction is 2-(5Z,8Z,11Z,14Z)-eicosatetraenoyl-sn-glycero-3-phosphoethanolamine + 2 O2 = 2-(prostaglandin G2)-sn-glycero-3-phosphoethanolamine. It catalyses the reaction 2-(prostaglandin G2)-sn-glycero-3-phosphoethanolamine + AH2 = 2-(prostaglandin H2)-sn-glycero-3-phosphoethanolamine + A + H2O. It carries out the reaction 2-(5Z,8Z,11Z,14Z)-eicosatetraenoyl-sn-glycero-3-phosphocholine + 2 O2 = 2-(prostaglandin G2)-sn-glycero-3-phosphocholine. The enzyme catalyses 2-(prostaglandin G2)-sn-glycero-3-phosphocholine + AH2 = 2-(prostaglandin H2)-sn-glycero-3-phosphocholine + A + H2O. The catalysed reaction is (15S)-hydroperoxy-(5Z,8Z,11Z,13E)-eicosatetraenoate + AH2 = (15S)-hydroxy-(5Z,8Z,11Z,13E)-eicosatetraenoate + A + H2O. It catalyses the reaction 2-(5Z,8Z,11Z,14Z)-eicosatetraenoyl-sn-glycero-3-phosphocholine + AH2 + O2 = 2-[(15S)-hydroxy-(5Z,8Z,11Z,13E)-eicosatetraenoyl]-sn-glycero-3-phosphocholine + A + H2O. It carries out the reaction 2-(5Z,8Z,11Z,14Z)-eicosatetraenoyl-sn-glycero-3-phosphocholine + AH2 + O2 = 2-[(15R)-hydroxy-(5Z,8Z,11Z,13E)-eicosatetraenoyl]-sn-glycero-3-phosphocholine + A + H2O. The enzyme catalyses 2-(5Z,8Z,11Z,14Z)-eicosatetraenoyl-sn-glycero-3-phosphocholine + AH2 + O2 = 2-[(11R)-hydroxy-(5Z,8Z,12E,14Z)-eicosatetraenoyl]-sn-glycero-3-phosphocholine + A + H2O. The catalysed reaction is (9Z,12Z)-octadecadienoate + AH2 + O2 = 9-hydroxy-(10E,12Z)-octadecadienoate + A + H2O. It catalyses the reaction (9Z,12Z)-octadecadienoate + AH2 + O2 = 13-hydroxy-(9Z,11E)-octadecadienoate + A + H2O. It carries out the reaction (5Z,8Z,11Z,14Z)-eicosatetraenoate + AH2 + O2 = (15R)-hydroxy-(5Z,8Z,11Z,13E)-eicosatetraenoate + A + H2O. The enzyme catalyses (5Z,8Z,11Z,14Z)-eicosatetraenoate + AH2 + O2 = (11R)-hydroxy-(5Z,8Z,12E,14Z)-eicosatetraenoate + A + H2O. The catalysed reaction is (5Z,8Z,11Z,14Z,17Z)-eicosapentaenoate + AH2 + O2 = (11R)-hydroxy-(5Z,8Z,12E,14Z,17Z)-eicosapentaenoate + A + H2O. It catalyses the reaction (5Z,8Z,11Z,14Z,17Z)-eicosapentaenoate + AH2 + O2 = (18S)-hydroxy-(5Z,8Z,11Z,14Z,16E)-eicosapentaenoate + A + H2O. It carries out the reaction (5Z,8Z,11Z,14Z,17Z)-eicosapentaenoate + AH2 + O2 = (18R)-hydroxy-(5Z,8Z,11Z,14Z,16E)-eicosapentaenoate + A + H2O. The enzyme catalyses (5Z,8Z,11Z,14Z,17Z)-eicosapentaenoate + AH2 + O2 = (15R)-hydroxy-(5Z,8Z,11Z,13E,17Z)-eicosapentaenoate + A + H2O. The catalysed reaction is (5Z,8Z,11Z,14Z,17Z)-eicosapentaenoate + AH2 + O2 = (15S)-hydroxy-(5Z,8Z,11Z,13E,17Z)-eicosapentaenoate + A + H2O. It catalyses the reaction (7Z,10Z,13Z,16Z,19Z)-docosapentaenoate + AH2 + O2 = 13R-hydroxy-(7Z,10Z,14E,16Z,19Z)-docosapentaenoate + A + H2O. It carries out the reaction (4Z,7Z,10Z,13Z,16Z,19Z)-docosahexaenoate + AH2 + O2 = 13-hydroxy-(4Z,7Z,10Z,14E,16Z,19Z)-docosahexaenoate + A + H2O. The enzyme catalyses (5S)-hydroxy-(6E,8Z,11Z,14Z)-eicosatetraenoate + AH2 + O2 = (5S,15R)-dihydroxy-(6E,8Z,11Z,13E)-eicosatetraenoate + A + H2O. The catalysed reaction is (4Z,7Z,10Z,13Z,16Z,19Z)-docosahexaenoate + AH2 + O2 = 17R-hydroxy-(4Z,7Z,10Z,13Z,15E,19Z)-docosahexaenoate + A + H2O. It catalyses the reaction (5S)-hydroxy-(6E,8Z,11Z,14Z)-eicosatetraenoate + AH2 + O2 = (5S,15S)-dihydroxy-(6E,8Z,11Z,13E)-eicosatetraenoate + A + H2O. It carries out the reaction (5S)-hydroxy-(6E,8Z,11Z,14Z)-eicosatetraenoate + AH2 + O2 = (5S,11R)-dihydroxy-(6E,8Z,12E,14Z)-eicosatetraenoate + A + H2O. The enzyme catalyses 2-(5Z,8Z,11Z,14Z-eicosatetraenoyl)-glycerol + 2 O2 = 2-glyceryl-prostaglandin G2. The catalysed reaction is 2-glyceryl-prostaglandin G2 + AH2 = 2-glyceryl-prostaglandin H2 + A + H2O. It catalyses the reaction (5Z,8Z,11Z,14Z)-eicosatetraenoate + O2 = (15R)-hydroperoxy-(5Z,8Z,11Z,13E)-eicosatetraenoate. It carries out the reaction (5Z,8Z,11Z,14Z)-eicosatetraenoate + O2 = 11R-hydroperoxy-(5Z,8Z,12E,14Z)-eicosatetraenoate. The enzyme catalyses (9Z,12Z)-octadecadienoate + AH2 + O2 = (9R)-hydroxy-(10E,12Z)-octadecadienoate + A + H2O. The catalysed reaction is (9Z,12Z)-octadecadienoate + AH2 + O2 = (9S)-hydroxy-(10E,12Z)-octadecadienoate + A + H2O. It catalyses the reaction (9Z,12Z)-octadecadienoate + AH2 + O2 = (13S)-hydroxy-(9Z,11E)-octadecadienoate + A + H2O. It carries out the reaction (9Z,12Z)-octadecadienoate + AH2 + O2 = (13R)-hydroxy-(9Z,11E)-octadecadienoate + A + H2O. It participates in lipid metabolism; prostaglandin biosynthesis. Functionally, dual cyclooxygenase and peroxidase in the biosynthesis pathway of prostanoids, a class of C20 oxylipins mainly derived from arachidonate ((5Z,8Z,11Z,14Z)-eicosatetraenoate, AA, C20:4(n-6)), with a particular role in the inflammatory response. The cyclooxygenase activity oxygenates AA to the hydroperoxy endoperoxide prostaglandin G2 (PGG2), and the peroxidase activity reduces PGG2 to the hydroxy endoperoxide prostaglandin H2 (PGH2), the precursor of all 2-series prostaglandins and thromboxanes. This complex transformation is initiated by abstraction of hydrogen at carbon 13 (with S-stereochemistry), followed by insertion of molecular O2 to form the endoperoxide bridge between carbon 9 and 11 that defines prostaglandins. The insertion of a second molecule of O2 (bis-oxygenase activity) yields a hydroperoxy group in PGG2 that is then reduced to PGH2 by two electrons. Similarly catalyzes successive cyclooxygenation and peroxidation of dihomo-gamma-linoleate (DGLA, C20:3(n-6)) and eicosapentaenoate (EPA, C20:5(n-3)) to corresponding PGH1 and PGH3, the precursors of 1- and 3-series prostaglandins. In an alternative pathway of prostanoid biosynthesis, converts 2-arachidonoyl lysophopholipids to prostanoid lysophopholipids, which are then hydrolyzed by intracellular phospholipases to release free prostanoids. Metabolizes 2-arachidonoyl glycerol yielding the glyceryl ester of PGH2, a process that can contribute to pain response. Generates lipid mediators from n-3 and n-6 polyunsaturated fatty acids (PUFAs) via a lipoxygenase-type mechanism. Oxygenates PUFAs to hydroperoxy compounds and then reduces them to corresponding alcohols. Plays a role in the generation of resolution phase interaction products (resolvins) during both sterile and infectious inflammation. Metabolizes docosahexaenoate (DHA, C22:6(n-3)) to 17R-HDHA, a precursor of the D-series resolvins (RvDs). As a component of the biosynthetic pathway of E-series resolvins (RvEs), converts eicosapentaenoate (EPA, C20:5(n-3)) primarily to 18S-HEPE that is further metabolized by ALOX5 and LTA4H to generate 18S-RvE1 and 18S-RvE2. In vascular endothelial cells, converts docosapentaenoate (DPA, C22:5(n-3)) to 13R-HDPA, a precursor for 13-series resolvins (RvTs) shown to activate macrophage phagocytosis during bacterial infection. In activated leukocytes, contributes to oxygenation of hydroxyeicosatetraenoates (HETE) to diHETES (5,15-diHETE and 5,11-diHETE). Can also use linoleate (LA, (9Z,12Z)-octadecadienoate, C18:2(n-6)) as substrate and produce hydroxyoctadecadienoates (HODEs) in a regio- and stereospecific manner, being (9R)-HODE ((9R)-hydroxy-(10E,12Z)-octadecadienoate) and (13S)-HODE ((13S)-hydroxy-(9Z,11E)-octadecadienoate) its major products. During neuroinflammation, plays a role in neuronal secretion of specialized preresolving mediators (SPMs) 15R-lipoxin A4 that regulates phagocytic microglia. This Neovison vison (American mink) protein is Prostaglandin G/H synthase 2 (PTGS2).